The primary structure comprises 366 residues: UDP-N-acetylenolpyruvoylglucosamine reductase (366 aa).

In terms of domain architecture, FAD-binding PCMH-type spans 27–197 (LGGPAAGFVV…LRVRFLLRDG (171 aa)). R175 is a catalytic residue. The active-site Proton donor is S252. Residue E358 is part of the active site.

The protein belongs to the MurB family. FAD serves as cofactor.

It localises to the cytoplasm. The catalysed reaction is UDP-N-acetyl-alpha-D-muramate + NADP(+) = UDP-N-acetyl-3-O-(1-carboxyvinyl)-alpha-D-glucosamine + NADPH + H(+). It functions in the pathway cell wall biogenesis; peptidoglycan biosynthesis. Its function is as follows. Cell wall formation. This is UDP-N-acetylenolpyruvoylglucosamine reductase from Saccharopolyspora erythraea (strain ATCC 11635 / DSM 40517 / JCM 4748 / NBRC 13426 / NCIMB 8594 / NRRL 2338).